We begin with the raw amino-acid sequence, 309 residues long: Ras-like protein 1 (309 aa).

GTP contacts are provided by residues 20–25 (GVGKSA), 36–42 (VDEYDPT), 66–67 (AG), 123–126 (NKLD), and 153–155 (SAK). The Effector region signature appears at 39–47 (YDPTIEDSY). Residues 177–303 (KYNSMNRQLD…SANARKESSG (127 aa)) are disordered. Polar residues-rich tracts occupy residues 179–188 (NSMNRQLDNT) and 209–235 (NGSY…NHNG). The segment covering 236–245 (ETTKRTDEKN) has biased composition (basic and acidic residues). Over residues 246 to 256 (YVNQNNNNEGN) the composition is skewed to low complexity. Residues 257 to 296 (TKYSSNGNGNRSDISRGNQNNALNSRSKQSAEPQKNSSAN) show a composition bias toward polar residues. A lipid anchor (S-palmitoyl cysteine) is attached at C305. A Cysteine methyl ester modification is found at C306. C306 is lipidated: S-farnesyl cysteine. A propeptide spans 307-309 (IIC) (removed in mature form).

It belongs to the small GTPase superfamily. Ras family. Farnesylated by RAM1-RAM2, which is required for targeting RAS1 to the cytoplasmic site of the endoplasmic reticulum, where proteolytic processing of the C-terminus by RCE1 and methylation of the resulting carboxyl group by STE14 occurs. In terms of processing, palmitoylated by the ERF2-SHR5 complex, which is required for proper plasma membrane localization of RAS1.

Its subcellular location is the cell membrane. It catalyses the reaction GTP + H2O = GDP + phosphate + H(+). With respect to regulation, alternates between an inactive form bound to GDP and an active form bound to GTP. Activated by guanine nucleotide-exchange factor (GEF) CDC25 and inactivated by GTPase-activating proteins (GAPs) IRA1 and IRA2. Its function is as follows. The S.cerevisiae Ras proteins modulate the activity of the adenylate cyclase catalytic subunit and therefore affect the biosynthesis of cyclic-AMP. The sequence is that of Ras-like protein 1 (RAS1) from Saccharomyces cerevisiae (strain ATCC 204508 / S288c) (Baker's yeast).